The primary structure comprises 415 residues: Isocitrate dehydrogenase [NADP] 1 (415 aa).

Thr-104 is a binding site for NADP(+). D-threo-isocitrate-binding residues include Ser-113, Asn-115, Arg-119, Arg-129, and Arg-153. Asp-307 provides a ligand contact to Mg(2+). Residues 339–345 (HGTAPKY), Asn-352, Tyr-390, and Arg-394 each bind NADP(+).

This sequence belongs to the isocitrate and isopropylmalate dehydrogenases family. In terms of assembly, homodimer. It depends on Mg(2+) as a cofactor. Mn(2+) is required as a cofactor.

The enzyme catalyses D-threo-isocitrate + NADP(+) = 2-oxoglutarate + CO2 + NADPH. In terms of biological role, catalyzes the oxidative decarboxylation of isocitrate to 2-oxoglutarate and carbon dioxide with the concomitant reduction of NADP(+). This Colwellia maris protein is Isocitrate dehydrogenase [NADP] 1.